Consider the following 536-residue polypeptide: Glutamate--tRNA ligase, mitochondrial (536 aa).

48 to 50 provides a ligand contact to L-glutamate; it reads RFA. Positions 53-61 match the 'HIGH' region motif; that stretch reads PTGFLHLGS. An ATP-binding site is contributed by His-58. Residues Glu-84, 235 to 239, and Arg-253 each bind L-glutamate; that span reads YHLAN. ATP is bound by residues Glu-256 and 291–295; that span reads KLSKR. The 'KMSKS' region signature appears at 291-295; it reads KLSKR.

The protein belongs to the class-I aminoacyl-tRNA synthetase family. Glutamate--tRNA ligase type 1 subfamily.

It is found in the mitochondrion matrix. It carries out the reaction tRNA(Glu) + L-glutamate + ATP = L-glutamyl-tRNA(Glu) + AMP + diphosphate. Catalyzes the attachment of glutamate to tRNA(Glu) in a two-step reaction: glutamate is first activated by ATP to form Glu-AMP and then transferred to the acceptor end of tRNA(Glu). This chain is Glutamate--tRNA ligase, mitochondrial (MSE1), found in Saccharomyces cerevisiae (strain ATCC 204508 / S288c) (Baker's yeast).